Reading from the N-terminus, the 314-residue chain is Vacuolar membrane protein SCRG_03194 (314 aa).

The segment at 32–60 (KPTSSVVSETSSKSLPSLTSSAFSTSSGA) is disordered. Residues 93–113 (VYIAVGAVIGAIFISILIWWL) traverse the membrane as a helical segment. Residues Ser-148, Ser-254, and Ser-274 each carry the phosphoserine modification. A disordered region spans residues 240 to 309 (EERKLNLNRP…PSMFLDDVLN (70 aa)). Residues 254–269 (SPERKEKKINSMEGYH) show a composition bias toward basic and acidic residues.

Belongs to the PRM5 family.

The protein localises to the vacuole membrane. This is Vacuolar membrane protein SCRG_03194 from Saccharomyces cerevisiae (strain RM11-1a) (Baker's yeast).